The following is a 551-amino-acid chain: Trehalose-6-phosphate hydrolase (551 aa).

D200 acts as the Nucleophile in catalysis. E251 (proton donor) is an active-site residue.

The protein belongs to the glycosyl hydrolase 13 family.

The protein localises to the cytoplasm. The catalysed reaction is alpha,alpha-trehalose 6-phosphate + H2O = D-glucose 6-phosphate + D-glucose. In terms of biological role, hydrolyzes trehalose-6-phosphate to glucose and glucose 6-phosphate. Can also very effectively hydrolyze p-nitrophenyl-alpha-D-glucopyranoside, but it does not recognize trehalose, sucrose, maltose, isomaltose, or maltodextrins. The chain is Trehalose-6-phosphate hydrolase (treC) from Escherichia coli (strain K12).